The chain runs to 292 residues: NAD-dependent protein deacetylase sir-2.4 (292 aa).

The 262-residue stretch at isoleucine 31–serine 292 folds into the Deacetylase sirtuin-type domain. NAD(+) is bound by residues glycine 56–tryptophan 75 and glutamine 116–aspartate 119. Histidine 136 (proton acceptor) is an active-site residue. Positions 144, 147, 163, and 169 each coordinate Zn(2+). Residues glycine 216–serine 218, asparagine 242–glutamine 244, and valine 260 contribute to the NAD(+) site.

This sequence belongs to the sirtuin family. Class IV subfamily. Zn(2+) is required as a cofactor.

The catalysed reaction is N(6)-acetyl-L-lysyl-[protein] + NAD(+) + H2O = 2''-O-acetyl-ADP-D-ribose + nicotinamide + L-lysyl-[protein]. In terms of biological role, NAD-dependent protein deacetylase. In Caenorhabditis elegans, this protein is NAD-dependent protein deacetylase sir-2.4 (sir-2.4).